The chain runs to 808 residues: Probable inorganic carbon transporter subunit DabA (808 aa).

Zn(2+) is bound by residues C334, D336, H494, and C509.

This sequence belongs to the inorganic carbon transporter (TC 9.A.2) DabA family. Forms a complex with DabB. The cofactor is Zn(2+).

The protein localises to the cell inner membrane. Its function is as follows. Part of an energy-coupled inorganic carbon pump. In Allorhizobium ampelinum (strain ATCC BAA-846 / DSM 112012 / S4) (Agrobacterium vitis (strain S4)), this protein is Probable inorganic carbon transporter subunit DabA.